Consider the following 384-residue polypeptide: NADH-ubiquinone oxidoreductase chain 5 (384 aa).

12 consecutive transmembrane segments (helical) span residues 12–32 (FYFL…FLLM), 50–70 (IVMT…VLLI), 92–112 (ILLV…PNLI), 113–133 (SILL…IYFQ), 153–173 (VALL…YIFY), 183–203 (MMII…QIPF), 215–235 (TPVS…YLLI), 244–264 (WWMA…AGLG), 274–293 (IIAL…LSMG), 298–320 (AFFH…GSII), 343–363 (CSCF…AGFY), and 364–384 (SKDL…SFFL).

It belongs to the complex I subunit 5 family.

Its subcellular location is the mitochondrion inner membrane. The catalysed reaction is a ubiquinone + NADH + 5 H(+)(in) = a ubiquinol + NAD(+) + 4 H(+)(out). Core subunit of the mitochondrial membrane respiratory chain NADH dehydrogenase (Complex I) that is believed to belong to the minimal assembly required for catalysis. Complex I functions in the transfer of electrons from NADH to the respiratory chain. The immediate electron acceptor for the enzyme is believed to be ubiquinone. This chain is NADH-ubiquinone oxidoreductase chain 5 (ND5), found in Anopheles arabiensis (Mosquito).